Reading from the N-terminus, the 846-residue chain is Sucrose synthase 6 (846 aa).

The interval 276 to 755 is GT-B glycosyltransferase; sequence CVFTVVIFSI…GLQRIYECYT (480 aa).

The protein belongs to the glycosyltransferase 1 family. Plant sucrose synthase subfamily.

It catalyses the reaction an NDP-alpha-D-glucose + D-fructose = a ribonucleoside 5'-diphosphate + sucrose + H(+). In terms of biological role, sucrose-cleaving enzyme that provides UDP-glucose and fructose for various metabolic pathways. The polypeptide is Sucrose synthase 6 (SUS6) (Oryza sativa subsp. japonica (Rice)).